Here is a 206-residue protein sequence, read N- to C-terminus: AT-hook motif nuclear-localized protein 28 (206 aa).

Disordered regions lie at residues 1–21 (METV…PKAP) and 160–206 (TEEE…PSPY). Residues 5 to 17 (GRPRGRPRGSKNK) constitute a DNA-binding region (a.T hook). The span at 7-18 (PRGRPRGSKNKP) shows a compositional bias: basic residues. In terms of domain architecture, PPC spans 27-173 (DPPMSPYILE…QRNSAEGEEE (147 aa)).

The protein localises to the nucleus. In terms of biological role, transcription factor that specifically binds AT-rich DNA sequences related to the nuclear matrix attachment regions (MARs). This Arabidopsis thaliana (Mouse-ear cress) protein is AT-hook motif nuclear-localized protein 28.